The chain runs to 287 residues: ATP synthase gamma chain (287 aa).

Belongs to the ATPase gamma chain family. In terms of assembly, F-type ATPases have 2 components, CF(1) - the catalytic core - and CF(0) - the membrane proton channel. CF(1) has five subunits: alpha(3), beta(3), gamma(1), delta(1), epsilon(1). CF(0) has three main subunits: a, b and c.

The protein resides in the cell inner membrane. In terms of biological role, produces ATP from ADP in the presence of a proton gradient across the membrane. The gamma chain is believed to be important in regulating ATPase activity and the flow of protons through the CF(0) complex. The sequence is that of ATP synthase gamma chain from Salmonella gallinarum (strain 287/91 / NCTC 13346).